Reading from the N-terminus, the 456-residue chain is Histidinol dehydrogenase homolog (456 aa).

Histidine 279 is a binding site for Zn(2+). Active-site proton acceptor residues include glutamate 347 and histidine 348. Histidine 440 provides a ligand contact to Zn(2+).

Belongs to the histidinol dehydrogenase family. Zn(2+) serves as cofactor.

The chain is Histidinol dehydrogenase homolog from Rhizobium meliloti (strain 1021) (Ensifer meliloti).